A 51-amino-acid chain; its full sequence is Ribosome biogenesis protein Nop10 (51 aa).

The protein belongs to the NOP10 family.

Functionally, involved in ribosome biogenesis; more specifically in 18S rRNA pseudouridylation and in cleavage of pre-rRNA. This Methanosarcina barkeri (strain Fusaro / DSM 804) protein is Ribosome biogenesis protein Nop10.